Consider the following 600-residue polypeptide: Arginine--tRNA ligase (600 aa).

A 'HIGH' region motif is present at residues 132-142 (ANPTGPLHVGH).

This sequence belongs to the class-I aminoacyl-tRNA synthetase family. As to quaternary structure, monomer.

Its subcellular location is the cytoplasm. It catalyses the reaction tRNA(Arg) + L-arginine + ATP = L-arginyl-tRNA(Arg) + AMP + diphosphate. This chain is Arginine--tRNA ligase, found in Ralstonia nicotianae (strain ATCC BAA-1114 / GMI1000) (Ralstonia solanacearum).